The sequence spans 72 residues: MMAKATMAFCFLLMLTTVMLPTEGKTIAGRTDCEQHTDCSAASGPVYCCQDSDCCGGVDYICTNYGQCVRHF.

Positions 1-21 are cleaved as a signal peptide; that stretch reads MMAKATMAFCFLLMLTTVMLP. Positions 22–30 are excised as a propeptide; that stretch reads TEGKTIAGR.

This sequence belongs to the teretoxin H (TH) superfamily. Post-translationally, contains 4 disulfide bonds. Expressed by the venom duct.

The protein resides in the secreted. This Terebra subulata (Chocolate spotted auger) protein is Teretoxin Tsu11.2.